A 323-amino-acid polypeptide reads, in one-letter code: Isoeugenol synthase 1 (323 aa).

NADP(+) is bound by residues Thr14–Leu17, Val36–Lys47, Val88–Gln90, Ser113–Phe115, Lys135, and Asn155–Leu157. Lys135 serves as the catalytic Proton donor/acceptor.

The protein belongs to the NmrA-type oxidoreductase family. Expressed in flowers, especially in corolla and tubes of petals, probably in both epidermal and mesophyll cell layers.

It carries out the reaction (E)-isoeugenol + acetate + NADP(+) = (E)-coniferyl acetate + NADPH. It participates in aromatic compound metabolism; phenylpropanoid biosynthesis. With respect to regulation, inhibited by zinc and copper ions. Repressed by 4-bromo-cinnamyl acetate. In terms of biological role, involved in the biosynthesis of the floral volatile isoeugenol. Catalyzes the synthesis of the phenylpropene isoeugenol from coniferyl acetate. Phenylpropenes are the primary constituents of various essential plant oils. They are produced as antimicrobial and antianimal compounds, or as floral attractants of pollinators. Isoeugenol is a characteristic aromatic constituent of spices and a floral volatile compound. The protein is Isoeugenol synthase 1 of Petunia hybrida (Petunia).